A 293-amino-acid chain; its full sequence is Carbapenem-hydrolyzing beta-lactamase KPC (293 aa).

The first 24 residues, 1–24 (MSLYRRLVLLSCLSWPLAGFSATA), serve as a signal peptide directing secretion. Ser-69 functions as the Acyl-ester intermediate in the catalytic mechanism. Glu-167 acts as the Proton acceptor in catalysis. 233 to 235 (KTG) is a binding site for substrate.

This sequence belongs to the class-A beta-lactamase family.

It carries out the reaction a beta-lactam + H2O = a substituted beta-amino acid. With respect to regulation, not inhibited by EDTA, inhibited by clavulanic acid and tazobactam. Its function is as follows. Hydrolyzes carbapenems, penicillins, cephalosporins and aztreonam with varying efficiency. The sequence is that of Carbapenem-hydrolyzing beta-lactamase KPC (bla) from Klebsiella oxytoca.